The primary structure comprises 570 residues: Glycine--tRNA ligase (570 aa).

Substrate is bound by residues Arg99 and Glu165. Residues 197 to 199 (RNE), 207 to 212 (LRLREF), 324 to 325 (EC), and 443 to 446 (GIDR) each bind ATP. Substrate is bound at residue 212 to 216 (FSQAE). 439-443 (EPSFG) provides a ligand contact to substrate.

This sequence belongs to the class-II aminoacyl-tRNA synthetase family.

It localises to the cytoplasm. The enzyme catalyses tRNA(Gly) + glycine + ATP = glycyl-tRNA(Gly) + AMP + diphosphate. Its function is as follows. Catalyzes the attachment of glycine to tRNA(Gly). This Thermococcus sibiricus (strain DSM 12597 / MM 739) protein is Glycine--tRNA ligase.